The chain runs to 102 residues: Large ribosomal subunit protein bL21 (102 aa).

It belongs to the bacterial ribosomal protein bL21 family. As to quaternary structure, part of the 50S ribosomal subunit. Contacts protein L20.

Its function is as follows. This protein binds to 23S rRNA in the presence of protein L20. This Exiguobacterium sp. (strain ATCC BAA-1283 / AT1b) protein is Large ribosomal subunit protein bL21.